A 214-amino-acid polypeptide reads, in one-letter code: Outer-membrane lipoprotein LolB (214 aa).

Residues 1 to 25 (MNNLKRFTESIFSCIALSTLLFLGG) form the signal peptide. Residue Cys26 is the site of N-palmitoyl cysteine attachment. The S-diacylglycerol cysteine moiety is linked to residue Cys26.

The protein belongs to the LolB family. As to quaternary structure, monomer.

The protein localises to the cell outer membrane. In terms of biological role, plays a critical role in the incorporation of lipoproteins in the outer membrane after they are released by the LolA protein. The protein is Outer-membrane lipoprotein LolB of Shewanella putrefaciens (strain CN-32 / ATCC BAA-453).